The following is a 312-amino-acid chain: Protoheme IX farnesyltransferase (312 aa).

Helical transmembrane passes span 29-49 (VMSL…GHMN), 50-70 (PVLA…SGAL), 90-110 (IPAG…LSAF), 117-137 (LMVN…YAVV), 150-170 (IVIG…AATG), 177-197 (VVLF…LSLF), 223-243 (ALFY…LGFA), 248-268 (GAIS…MWVA), and 292-312 (LFAV…FGGF).

The protein belongs to the UbiA prenyltransferase family. Protoheme IX farnesyltransferase subfamily.

The protein resides in the cell inner membrane. The enzyme catalyses heme b + (2E,6E)-farnesyl diphosphate + H2O = Fe(II)-heme o + diphosphate. The protein operates within porphyrin-containing compound metabolism; heme O biosynthesis; heme O from protoheme: step 1/1. In terms of biological role, converts heme B (protoheme IX) to heme O by substitution of the vinyl group on carbon 2 of heme B porphyrin ring with a hydroxyethyl farnesyl side group. The sequence is that of Protoheme IX farnesyltransferase from Brucella anthropi (strain ATCC 49188 / DSM 6882 / CCUG 24695 / JCM 21032 / LMG 3331 / NBRC 15819 / NCTC 12168 / Alc 37) (Ochrobactrum anthropi).